A 161-amino-acid polypeptide reads, in one-letter code: Type IV major fimbrial protein FimA (161 aa).

The propeptide at 1-7 (MKSLQKG) is leader sequence. The residue at position 8 (Phe8) is an N-methylphenylalanine. Residues 8–28 (FTLIELMIVVAIIGILAAFAI) form a helical membrane-spanning segment. A disulfide bond links Cys63 and Cys106.

It belongs to the N-Me-Phe pilin family. The pili are polar flexible filaments of about 5.4 nanometers diameter and 2.5 micrometers average length; they consist of only a single polypeptide chain arranged in a helical configuration of five subunits per turn in the assembled pilus.

Its subcellular location is the fimbrium. It is found in the membrane. Major component of the type IV fimbriae that plays an essential role in twitching motility, natural transformation, and protease secretion. The chain is Type IV major fimbrial protein FimA (fimA) from Dichelobacter nodosus (Bacteroides nodosus).